A 379-amino-acid chain; its full sequence is Alcohol dehydrogenase 1 (379 aa).

Residues Cys-47, Thr-49, His-69, Cys-99, Cys-102, Cys-105, Cys-113, and Cys-177 each contribute to the Zn(2+) site. Residues Thr-49 and His-69 each coordinate an alcohol. Thr-49 provides a ligand contact to NAD(+). NAD(+) contacts are provided by residues 202-207 (GLGAVG), Asp-226, Arg-231, Thr-272, Val-295, 295-297 (VGV), Phe-322, and Arg-372.

It belongs to the zinc-containing alcohol dehydrogenase family. In terms of assembly, homodimer. The cofactor is Zn(2+).

It localises to the cytoplasm. It catalyses the reaction a primary alcohol + NAD(+) = an aldehyde + NADH + H(+). It carries out the reaction a secondary alcohol + NAD(+) = a ketone + NADH + H(+). This chain is Alcohol dehydrogenase 1 (ADH1), found in Cenchrus americanus (Pearl millet).